Reading from the N-terminus, the 440-residue chain is Chromosomal replication initiator protein DnaA (440 aa).

The segment at 1 to 75 is domain I, interacts with DnaA modulators; the sequence is MNPNQILENL…QSGNKASVLI (75 aa). Residues 75 to 99 form a domain II region; it reads IQAQSAKQSSKSTKIDIAHIKAQST. The interval 100–316 is domain III, AAA+ region; the sequence is ILNPSFTFES…GIIISLNAYA (217 aa). Positions 146, 148, 149, and 150 each coordinate ATP. Residues 317–440 form a domain IV, binds dsDNA region; that stretch reads TILGQEITLE…KNKILVKSQS (124 aa).

This sequence belongs to the DnaA family. Oligomerizes as a right-handed, spiral filament on DNA at oriC.

The protein localises to the cytoplasm. In terms of biological role, plays an essential role in the initiation and regulation of chromosomal replication. ATP-DnaA binds to the origin of replication (oriC) to initiate formation of the DNA replication initiation complex once per cell cycle. Binds the DnaA box (a 9 base pair repeat at the origin) and separates the double-stranded (ds)DNA. Forms a right-handed helical filament on oriC DNA; dsDNA binds to the exterior of the filament while single-stranded (ss)DNA is stabiized in the filament's interior. The ATP-DnaA-oriC complex binds and stabilizes one strand of the AT-rich DNA unwinding element (DUE), permitting loading of DNA polymerase. After initiation quickly degrades to an ADP-DnaA complex that is not apt for DNA replication. Binds acidic phospholipids. The polypeptide is Chromosomal replication initiator protein DnaA (Campylobacter jejuni subsp. jejuni serotype O:6 (strain 81116 / NCTC 11828)).